A 77-amino-acid polypeptide reads, in one-letter code: Small ribosomal subunit protein uS17 (77 aa).

The protein belongs to the universal ribosomal protein uS17 family. Part of the 30S ribosomal subunit.

One of the primary rRNA binding proteins, it binds specifically to the 5'-end of 16S ribosomal RNA. The chain is Small ribosomal subunit protein uS17 from Anaplasma marginale (strain St. Maries).